The sequence spans 139 residues: Self-incompatibility protein S1 (139 aa).

The N-terminal stretch at 1-19 (MNIFYVIVLLSFFLSKSSG) is a signal peptide. Asparagine 51 carries an N-linked (GlcNAc...) asparagine glycan.

The protein belongs to the plant self-incompatibility (S1) protein family. Glycosylated (S1b) and unglocosylated (S1a) forms coexist. As to expression, accumulates in the stigma (at protein level).

The protein localises to the secreted. Its function is as follows. Exhibits specific pollen self-inhibitory activity thus preventing self-fertilization. The sequence is that of Self-incompatibility protein S1 from Papaver rhoeas (Common poppy).